Reading from the N-terminus, the 601-residue chain is Probable serine/threonine-protein kinase WNK3 (601 aa).

The region spanning 34–291 (GRFNEILGKG…ARELLDDPFL (258 aa)) is the Protein kinase domain. ATP is bound by residues 114–117 (TELF) and K164. Residue D181 is the Proton acceptor of the active site. Disordered stretches follow at residues 470-498 (GWRP…PGGA) and 551-601 (ADDD…SEQP). Residues 477–493 (TDDDDDDDLVGGGDDPD) show a composition bias toward acidic residues. Polar residues predominate over residues 560–571 (LQGSSSDTGGSN). Positions 572-583 (HEQHAMGKDKEV) are enriched in basic and acidic residues.

It belongs to the protein kinase superfamily. Ser/Thr protein kinase family. WNK subfamily.

The enzyme catalyses L-seryl-[protein] + ATP = O-phospho-L-seryl-[protein] + ADP + H(+). The catalysed reaction is L-threonyl-[protein] + ATP = O-phospho-L-threonyl-[protein] + ADP + H(+). The sequence is that of Probable serine/threonine-protein kinase WNK3 (WNK3) from Oryza sativa subsp. japonica (Rice).